We begin with the raw amino-acid sequence, 552 residues long: Carotenoid cleavage dioxygenase 8 homolog A, chloroplastic (552 aa).

The transit peptide at 1 to 43 (MATSLTLIATPCTAPRSSSSFALAPRLPPRCSNATAARRRAVR) directs the protein to the chloroplast. Residues 32-73 (SNATAARRRAVRATTLQSDQEPAGSGDSGATTTKLSASTSVR) form a disordered region. A compositionally biased stretch (polar residues) spans 59 to 72 (SGATTTKLSASTSV). 4 residues coordinate Fe cation: His239, His289, His356, and His543.

The protein belongs to the carotenoid oxygenase family. It depends on Fe(2+) as a cofactor. In terms of tissue distribution, highly expressed in panicles, inflorescences and parenchyma cells of the root stele, and at lower levels in shoot apex, leaf buds and xylem parenchyma cells of the stem.

It is found in the plastid. The protein localises to the chloroplast. Its function is as follows. May be involved in strigolactones biosynthesis. The protein is Carotenoid cleavage dioxygenase 8 homolog A, chloroplastic (CCD8A) of Oryza sativa subsp. japonica (Rice).